The sequence spans 689 residues: Protein asunder (689 aa).

Positions 521–550 form a coiled coil; that stretch reads NGARLKLSKAKDQYRLLYRELEQLIQLNAT. Disordered regions lie at residues 578 to 619 and 662 to 689; these read GASL…SKRR and PDFGNKDKDTVASGASITPNVKEESVRS. A compositionally biased stretch (low complexity) spans 599–614; the sequence is SSGSASGSSNSNSLLK. A Nuclear localization signal (NLS) motif is present at residues 613–619; it reads LKASKRR.

This sequence belongs to the Integrator subunit 13 family. In terms of assembly, belongs to the multiprotein complex Integrator, at least composed of IntS1, IntS2, IntS3, IntS4, omd/IntS5, IntS6, defl/IntS7, IntS8, IntS9, IntS10, IntS11, IntS12, asun/IntS13, IntS14 and IntS15. The core complex associates with protein phosphatase 2A subunits mts/PP2A and Pp2A-29B, to form the Integrator-PP2A (INTAC) complex. In terms of processing, phosphorylated.

The protein localises to the nucleus. It is found in the cytoplasm. Its subcellular location is the perinuclear region. Component of the integrator complex, a multiprotein complex that terminates RNA polymerase II (Pol II) transcription in the promoter-proximal region of genes. The integrator complex provides a quality checkpoint during transcription elongation by driving premature transcription termination of transcripts that are unfavorably configured for transcriptional elongation: the complex terminates transcription by (1) catalyzing dephosphorylation of the C-terminal domain (CTD) of Pol II subunit Polr2A/Rbp1 and Spt5, and (2) degrading the exiting nascent RNA transcript via endonuclease activity. The integrator complex is also involved in the 3'-end processing of the U7 snRNA, and also the spliceosomal snRNAs U1, U2, U4 and U5. The protein is Protein asunder (asun) of Drosophila yakuba (Fruit fly).